A 591-amino-acid polypeptide reads, in one-letter code: Uncoordinated protein 58 (591 aa).

A disordered region spans residues 1-24 (MFFYSPNVAPQPSSTSHRRPTLTH). The helical transmembrane segment at 184–204 (VILVSVLIGYLCLGAWILMLL) threads the bilayer. Asn-226 carries N-linked (GlcNAc...) asparagine glycosylation. The next 5 helical transmembrane spans lie at 289–309 (TFPTAILYVLTVLTTCGYGEV), 318–338 (VFSVAFALVGIPLMFITAADI), 400–420 (PIGAYVSCICIYCSIGSAMFI), 428–448 (FIHAFHFGFNLIVTVGLGDIV), and 453–473 (IFLSLIVAFVIVGLSVVTMCV).

The protein belongs to the two pore domain potassium channel (TC 1.A.1.8) family.

Its subcellular location is the membrane. Functionally, has a role in mobility, possibly in the transport of potassium in muscles. The sequence is that of Uncoordinated protein 58 from Caenorhabditis elegans.